A 226-amino-acid chain; its full sequence is Lysosomal-associated transmembrane protein 4B (226 aa).

4 consecutive transmembrane segments (helical) span residues 26-46, 72-92, 100-120, and 153-173; these read ILLGVWYLIINAVVLLILLSA, MCIAIAISLLMILICAMATYG, WIIPFFCYQIFDFALNTLVAI, and CLVLIILLFISIILTFKGYLI. Positions 205-221 are required for NEDD4 interaction; sequence PPYDDATVNGAAKEPPP.

The protein belongs to the LAPTM4/LAPTM5 transporter family. In terms of assembly, homooligomer; upon reaching the lysosomes. Interacts with MCOLN1. Interacts with NEDD4; may play a role in the lysosomal sorting of LAPTM4B; enhances HGS association with NEDD4; mediates inhibition of EGFR degradation. Interacts with PIP5K1C; promotes SNX5 association with LAPTM4B; kinase activity of PIP5K1C is required; interaction is regulated by phosphatidylinositol 4,5-bisphosphate generated by PIP5K1C. Interacts with HGS; promotes HGS ubiquitination. Interacts with SNX5. Interacts with SLC3A2 and SLC7A5; recruits SLC3A2 and SLC7A5 to lysosomes to promote leucine uptake into these organelles and is required for mTORC1 activation. Interacts with LRRC32; decreases TGFB1 production in regulatory T cells. Interacts with BECN1; competes with EGFR for LAPTM4B binding; regulates EGFR activity. Interacts with EGFR; positively correlates with EGFR activation. Undergoes proteolytic cleavage following delivery to the lysosomes. In terms of processing, ubiquitinated by NEDD4.

The protein localises to the endomembrane system. It is found in the late endosome membrane. Its subcellular location is the cell membrane. It localises to the cell projection. The protein resides in the lysosome membrane. The protein localises to the endosome membrane. It is found in the endosome. Its subcellular location is the multivesicular body membrane. It localises to the multivesicular body lumen. Functionally, required for optimal lysosomal function. Blocks EGF-stimulated EGFR intraluminal sorting and degradation. Conversely by binding with the phosphatidylinositol 4,5-bisphosphate, regulates its PIP5K1C interaction, inhibits HGS ubiquitination and relieves LAPTM4B inhibition of EGFR degradation. Recruits SLC3A2 and SLC7A5 (the Leu transporter) to the lysosome, promoting entry of leucine and other essential amino acid (EAA) into the lysosome, stimulating activation of proton-transporting vacuolar (V)-ATPase protein pump (V-ATPase) and hence mTORC1 activation. Plays a role as negative regulator of TGFB1 production in regulatory T cells. Binds ceramide and facilitates its exit from late endosome in order to control cell death pathways. In Macaca fascicularis (Crab-eating macaque), this protein is Lysosomal-associated transmembrane protein 4B.